A 574-amino-acid chain; its full sequence is Isocitrate dehydrogenase kinase/phosphatase (574 aa).

ATP is bound by residues 315–321 (APGIRGM) and K336. The active site involves D371.

Belongs to the AceK family.

The protein localises to the cytoplasm. The enzyme catalyses L-seryl-[isocitrate dehydrogenase] + ATP = O-phospho-L-seryl-[isocitrate dehydrogenase] + ADP + H(+). Functionally, bifunctional enzyme which can phosphorylate or dephosphorylate isocitrate dehydrogenase (IDH) on a specific serine residue. This is a regulatory mechanism which enables bacteria to bypass the Krebs cycle via the glyoxylate shunt in response to the source of carbon. When bacteria are grown on glucose, IDH is fully active and unphosphorylated, but when grown on acetate or ethanol, the activity of IDH declines drastically concomitant with its phosphorylation. This Escherichia coli (strain SMS-3-5 / SECEC) protein is Isocitrate dehydrogenase kinase/phosphatase.